Here is a 254-residue protein sequence, read N- to C-terminus: Allene oxide cyclase 4, chloroplastic (254 aa).

Residues 1–52 constitute a chloroplast transit peptide; the sequence is MIMASSAAASISMITLRNLSRNHQSHQSTFLGFSRSFHNQRISSNSPGLSTR.

It belongs to the allene oxide cyclase family. As to expression, highly expressed in fully developed leaves.

It is found in the plastid. The protein resides in the chloroplast. The enzyme catalyses (9Z,13S,15Z)-12,13-epoxyoctadeca-9,11,15-trienoate = (9S,13S,15Z)-12-oxophyto-10,15-dienoate. In terms of biological role, involved in the production of 12-oxo-phytodienoic acid (OPDA), a precursor of jasmonic acid. This chain is Allene oxide cyclase 4, chloroplastic (AOC4), found in Arabidopsis thaliana (Mouse-ear cress).